A 98-amino-acid polypeptide reads, in one-letter code: Cysteine-rich and transmembrane domain-containing protein WIH2 (98 aa).

Residues 1-77 (MSQYNQPPVG…PPQHQQQQSS (77 aa)) form a disordered region. The span at 9 to 21 (VGVPPPQGYPPEG) shows a compositional bias: pro residues. Over residues 37–55 (YPQQGYPPQGYPQQGYPQQ) the composition is skewed to low complexity. Pro residues predominate over residues 56–70 (GYPPPYAPQYPPPPQ). Residues 75 to 92 (QSSPGFLEGCLAALCCCC) traverse the membrane as a helical segment.

Belongs to the CYSTM1 family. In terms of tissue distribution, expressed in floral organ primordia.

It is found in the membrane. In terms of biological role, required for the promotion of megasporogenesis, or promotion of germ cell formation from somatic precursor cells. Acts redundantly with WIH1. Functions in a genetic pathway downstream of SPL/NZZ and WUS and together with TRN2 in promoting megasporogenesis. The polypeptide is Cysteine-rich and transmembrane domain-containing protein WIH2 (Arabidopsis thaliana (Mouse-ear cress)).